Reading from the N-terminus, the 221-residue chain is GTP-binding nuclear protein Ran/TC4 (221 aa).

One can recognise a Small GTPase Ran-type domain in the interval 10 to 174 (DYPSFKLVIV…LYLARKLAGD (165 aa)). Residue 21-28 (DGGTGKTT) coordinates GTP. The interval 40 to 48 (KKYEPTIGV) is switch-I. GTP contacts are provided by residues Gly-71, 125-128 (NKVD), and 153-155 (SAK). Positions 71 to 87 (GQEKFGGLRDGYYIHGQ) are switch-II.

This sequence belongs to the small GTPase superfamily. Ran family. Found in a nuclear export complex with RanGTP, exportin and pre-miRNA.

It is found in the nucleus. GTP-binding protein involved in nucleocytoplasmic transport. Required for the import of protein into the nucleus and also for RNA export. Involved in chromatin condensation and control of cell cycle. The chain is GTP-binding nuclear protein Ran/TC4 from Vicia faba (Broad bean).